Here is a 171-residue protein sequence, read N- to C-terminus: MDYFTLFGLPAHYQLDTQALSLRFQDLQRQYHPDKFASGTQAEQLAAVQHSATINQAWQTLRHPLTRAEYLLSLHGFDLASEQHTVRDTAFLMEQLELREELDEIEQAKDEARLESFIKRVKTMFDARHQLMVEQLDNETWDVAADTVRKLRFLDKLRSSAEQLEEKLLDF.

The 73-residue stretch at 2 to 74 (DYFTLFGLPA…LTRAEYLLSL (73 aa)) folds into the J domain.

The protein belongs to the HscB family. Interacts with HscA and stimulates its ATPase activity. Interacts with IscU.

In terms of biological role, co-chaperone involved in the maturation of iron-sulfur cluster-containing proteins. Seems to help targeting proteins to be folded toward HscA. The polypeptide is Co-chaperone protein HscB (Citrobacter koseri (strain ATCC BAA-895 / CDC 4225-83 / SGSC4696)).